Here is a 460-residue protein sequence, read N- to C-terminus: Probable asparagine--tRNA ligase, mitochondrial (460 aa).

Belongs to the class-II aminoacyl-tRNA synthetase family.

The protein localises to the mitochondrion matrix. It carries out the reaction tRNA(Asn) + L-asparagine + ATP = L-asparaginyl-tRNA(Asn) + AMP + diphosphate + H(+). In Dictyostelium discoideum (Social amoeba), this protein is Probable asparagine--tRNA ligase, mitochondrial (asnS2).